Reading from the N-terminus, the 468-residue chain is 6-phosphogluconate dehydrogenase, decarboxylating (468 aa).

NADP(+)-binding positions include 10-15 (GMAVMG), 33-35 (NRS), 74-76 (VKA), and asparagine 102. Residues asparagine 102 and 128-130 (SGG) each bind substrate. Residue lysine 183 is the Proton acceptor of the active site. 186 to 187 (HN) provides a ligand contact to substrate. The active-site Proton donor is glutamate 190. Residues tyrosine 191, lysine 260, arginine 287, arginine 445, and histidine 451 each contribute to the substrate site.

This sequence belongs to the 6-phosphogluconate dehydrogenase family. In terms of assembly, homodimer.

It catalyses the reaction 6-phospho-D-gluconate + NADP(+) = D-ribulose 5-phosphate + CO2 + NADPH. It participates in carbohydrate degradation; pentose phosphate pathway; D-ribulose 5-phosphate from D-glucose 6-phosphate (oxidative stage): step 3/3. Its function is as follows. Catalyzes the oxidative decarboxylation of 6-phosphogluconate to ribulose 5-phosphate and CO(2), with concomitant reduction of NADP to NADPH. This is 6-phosphogluconate dehydrogenase, decarboxylating (gnd) from Salmonella typhimurium (strain LT2 / SGSC1412 / ATCC 700720).